The sequence spans 117 residues: Snaclec CHH-B subunit beta (117 aa).

Disulfide bonds link Cys-2–Cys-13, Cys-30–Cys-115, and Cys-92–Cys-107. A C-type lectin domain is found at 9–116; that stretch reads YEGHCYRVFQ…CSKTHNVVCK (108 aa).

It belongs to the snaclec family. In terms of assembly, heterodimer of subunits alpha and beta; disulfide-linked. Expressed by the venom gland.

The protein resides in the secreted. Functionally, binds to the subunit GPIbalpha (GP1BA) of the platelet GPIb/V/IX receptor system. It inhibits ristocetin- and vWF-induced platelet aggregation in platelet-rich plasma by inhibiting the binding of vWF to GPIbalpha. In Crotalus horridus (Timber rattlesnake), this protein is Snaclec CHH-B subunit beta.